A 237-amino-acid polypeptide reads, in one-letter code: Insulin-like growth factor-binding protein 4 (237 aa).

An IGFBP N-terminal domain is found at 2 to 82; sequence EAIHCPPCSE…VHGQGVCMEL (81 aa). Intrachain disulfides connect cysteine 6-cysteine 32, cysteine 9-cysteine 34, cysteine 17-cysteine 35, cysteine 23-cysteine 38, cysteine 46-cysteine 59, and cysteine 53-cysteine 79. Residue asparagine 104 is glycosylated (N-linked (GlcNAc...) asparagine). Intrachain disulfides connect cysteine 110–cysteine 117, cysteine 153–cysteine 183, cysteine 194–cysteine 205, and cysteine 207–cysteine 228. Residues 150–228 form the Thyroglobulin type-1 domain; that stretch reads QGSCQSELHR…GLEPKGELDC (79 aa). The residue at position 234 (serine 234) is a Phosphoserine.

Binds IGF2 more than IGF1. In terms of processing, there are two different molecular mass variants (29 kDa and 24 kDa forms). The 29 kDa form was shown to be N-glycosylated. As to expression, detected in adult ewe, liver &gt; kidney &gt; lung &gt;&gt; heart and also in several fetal tissues.

It is found in the secreted. Its function is as follows. IGF-binding proteins prolong the half-life of the IGFs and have been shown to either inhibit or stimulate the growth promoting effects of the IGFs on cell culture. They alter the interaction of IGFs with their cell surface receptors. This chain is Insulin-like growth factor-binding protein 4 (IGFBP4), found in Ovis aries (Sheep).